We begin with the raw amino-acid sequence, 122 residues long: Large ribosomal subunit protein uL14 (122 aa).

This sequence belongs to the universal ribosomal protein uL14 family. Part of the 50S ribosomal subunit. Forms a cluster with proteins L3 and L19. In the 70S ribosome, L14 and L19 interact and together make contacts with the 16S rRNA in bridges B5 and B8.

In terms of biological role, binds to 23S rRNA. Forms part of two intersubunit bridges in the 70S ribosome. The chain is Large ribosomal subunit protein uL14 from Desulforamulus reducens (strain ATCC BAA-1160 / DSM 100696 / MI-1) (Desulfotomaculum reducens).